We begin with the raw amino-acid sequence, 98 residues long: Large ribosomal subunit protein uL23c (98 aa).

It belongs to the universal ribosomal protein uL23 family. As to quaternary structure, part of the 50S ribosomal subunit.

It localises to the plastid. The protein localises to the chloroplast. In terms of biological role, binds to 23S rRNA. The polypeptide is Large ribosomal subunit protein uL23c (rpl23) (Thalassiosira pseudonana (Marine diatom)).